Here is a 129-residue protein sequence, read N- to C-terminus: 3-aminoacrylate deaminase RutC (129 aa).

The protein belongs to the RutC family.

It catalyses the reaction (Z)-3-aminoacrylate + H2O + H(+) = 3-oxopropanoate + NH4(+). Functionally, involved in pyrimidine catabolism. Catalyzes the deamination of 3-aminoacrylate to malonic semialdehyde, a reaction that can also occur spontaneously. RutC may facilitate the reaction and modulate the metabolic fitness, rather than catalyzing essential functions. The protein is 3-aminoacrylate deaminase RutC of Caulobacter segnis (strain ATCC 21756 / DSM 7131 / JCM 7823 / NBRC 15250 / LMG 17158 / TK0059) (Mycoplana segnis).